A 333-amino-acid polypeptide reads, in one-letter code: MNDTLALLQKFNAHPDSRCWYVAWNPKGTLLASCGGDRTIRIWGREGDSWECKTVLQDGHQRTVRKVAWSPCGNYLASASFDATTCIWKKKNDDFECLTVLEGHENEVKCVAWAPSGNLLATCSRDKSVWIWEVDEENEYECVSVVNSHTQDVKHVVWHPTQELLASCSYDNNVCVYKEEDDDWECRATLEGHTSTVWGLTFDPSGQRLASCSDDCTVKIWKECQPEGGQEGTDAAWKCVCTLSGFHGRTVYDIAWCPLTGALATACGDDGVRVFKEDETADPDQPAFSLSAHVPKAHTQDVNCIAWHPKEAGLLVSCSDNGEIAVWNYQSGV.

7 WD repeats span residues 14–53 (HPDSRCWYVAWNPKGTLLASCGGDRTIRIWGREGDSWECK), 59–98 (GHQRTVRKVAWSPCGNYLASASFDATTCIWKKKNDDFECL), 103–142 (GHENEVKCVAWAPSGNLLATCSRDKSVWIWEVDEENEYEC), 148–187 (SHTQDVKHVVWHPTQELLASCSYDNNVCVYKEEDDDWECR), 192–231 (GHTSTVWGLTFDPSGQRLASCSDDCTVKIWKECQPEGGQE), 246–285 (FHGRTVYDIAWCPLTGALATACGDDGVRVFKEDETADPDQ), and 297–333 (AHTQDVNCIAWHPKEAGLLVSCSDNGEIAVWNYQSGV).

The protein belongs to the WD repeat CIA1 family. In terms of assembly, component of the CIA complex.

In terms of biological role, key component of the cytosolic iron-sulfur protein assembly (CIA) complex, a multiprotein complex that mediates the incorporation of iron-sulfur cluster into extramitochondrial Fe/S proteins. In Salmo salar (Atlantic salmon), this protein is Probable cytosolic iron-sulfur protein assembly protein ciao1-B (ciao1b).